We begin with the raw amino-acid sequence, 187 residues long: 1,6-anhydro-N-acetylmuramyl-L-alanine amidase AmpD (187 aa).

Residues 29–167 form the N-acetylmuramoyl-L-alanine amidase domain; the sequence is SLLVVHNISL…TPDRKTDPGP (139 aa). His34 is a Zn(2+) binding site. Glu116 functions as the Proton acceptor in the catalytic mechanism. Residues His154 and Asp164 each contribute to the Zn(2+) site.

It belongs to the N-acetylmuramoyl-L-alanine amidase 2 family. It depends on Zn(2+) as a cofactor.

Its subcellular location is the cytoplasm. It carries out the reaction Hydrolyzes the link between N-acetylmuramoyl residues and L-amino acid residues in certain cell-wall glycopeptides.. Its function is as follows. Involved in cell wall peptidoglycan recycling. Specifically cleaves the amide bond between the lactyl group of N-acetylmuramic acid and the alpha-amino group of the L-alanine in degradation products containing an anhydro N-acetylmuramyl moiety. In Salmonella typhimurium (strain LT2 / SGSC1412 / ATCC 700720), this protein is 1,6-anhydro-N-acetylmuramyl-L-alanine amidase AmpD (ampD).